A 172-amino-acid polypeptide reads, in one-letter code: Adenine phosphoribosyltransferase (172 aa).

It belongs to the purine/pyrimidine phosphoribosyltransferase family. As to quaternary structure, homodimer.

The protein resides in the cytoplasm. The enzyme catalyses AMP + diphosphate = 5-phospho-alpha-D-ribose 1-diphosphate + adenine. It functions in the pathway purine metabolism; AMP biosynthesis via salvage pathway; AMP from adenine: step 1/1. Its function is as follows. Catalyzes a salvage reaction resulting in the formation of AMP, that is energically less costly than de novo synthesis. The protein is Adenine phosphoribosyltransferase of Ligilactobacillus salivarius (strain UCC118) (Lactobacillus salivarius).